Consider the following 367-residue polypeptide: GTP cyclohydrolase FolE2 (367 aa).

This sequence belongs to the GTP cyclohydrolase IV family.

It carries out the reaction GTP + H2O = 7,8-dihydroneopterin 3'-triphosphate + formate + H(+). It participates in cofactor biosynthesis; 7,8-dihydroneopterin triphosphate biosynthesis; 7,8-dihydroneopterin triphosphate from GTP: step 1/1. In terms of biological role, converts GTP to 7,8-dihydroneopterin triphosphate. This chain is GTP cyclohydrolase FolE2, found in Dinoroseobacter shibae (strain DSM 16493 / NCIMB 14021 / DFL 12).